The primary structure comprises 732 residues: Polyribonucleotide nucleotidyltransferase (732 aa).

The Mg(2+) site is built by Asp503 and Asp509. In terms of domain architecture, KH spans 570-629 (PRLTSIQIPVDAIGLIIGKGGETIRSITEETGAEINIEDDGTVTIACSSPEGTNAAVETI). An S1 motif domain is found at 639 to 713 (GNTYLGKVRD…GKNRFALSIK (75 aa)). The segment at 710–732 (LSIKAVESEPEKSDENKAGTEGN) is disordered. The segment covering 715–732 (VESEPEKSDENKAGTEGN) has biased composition (basic and acidic residues).

It belongs to the polyribonucleotide nucleotidyltransferase family. It depends on Mg(2+) as a cofactor.

The protein localises to the cytoplasm. The catalysed reaction is RNA(n+1) + phosphate = RNA(n) + a ribonucleoside 5'-diphosphate. Functionally, involved in mRNA degradation. Catalyzes the phosphorolysis of single-stranded polyribonucleotides processively in the 3'- to 5'-direction. In Chlorobium phaeobacteroides (strain DSM 266 / SMG 266 / 2430), this protein is Polyribonucleotide nucleotidyltransferase.